Consider the following 276-residue polypeptide: Omega-amidase NIT2 (276 aa).

In terms of domain architecture, CN hydrolase spans 4 to 248 (FRLALIQLQV…ETILYSDIDL (245 aa)). Ser-26 is modified (phosphoserine). The active-site Proton acceptor is the Glu-43. Lys-68 carries the post-translational modification N6-acetyllysine; alternate. N6-succinyllysine; alternate is present on Lys-68. Lys-112 functions as the Proton donor in the catalytic mechanism. 2 positions are modified to N6-succinyllysine: Lys-123 and Lys-130. Cys-153 acts as the Nucleophile in catalysis.

This sequence belongs to the carbon-nitrogen hydrolase superfamily. NIT1/NIT2 family. Homodimer.

The protein localises to the cytoplasm. The catalysed reaction is a monoamide of a dicarboxylate + H2O = a dicarboxylate + NH4(+). It catalyses the reaction 2-oxoglutaramate + H2O = 2-oxoglutarate + NH4(+). The enzyme catalyses 2-oxosuccinamate + H2O = oxaloacetate + NH4(+). Has omega-amidase activity. The role of omega-amidase is to remove potentially toxic intermediates by converting 2-oxoglutaramate and 2-oxosuccinamate to biologically useful 2-oxoglutarate and oxaloacetate, respectively. Can also hydrolyze gamma-monomethyl-alpha-ketoglutarate in vitro. This chain is Omega-amidase NIT2, found in Mus musculus (Mouse).